A 386-amino-acid polypeptide reads, in one-letter code: DNA-directed RNA polymerase subunit Rpo1C (386 aa).

This sequence belongs to the RNA polymerase beta' chain family. Part of the RNA polymerase complex.

The protein resides in the cytoplasm. The enzyme catalyses RNA(n) + a ribonucleoside 5'-triphosphate = RNA(n+1) + diphosphate. DNA-dependent RNA polymerase (RNAP) catalyzes the transcription of DNA into RNA using the four ribonucleoside triphosphates as substrates. Forms part of the jaw domain. The polypeptide is DNA-directed RNA polymerase subunit Rpo1C (Methanococcus maripaludis (strain C6 / ATCC BAA-1332)).